A 504-amino-acid chain; its full sequence is ATP synthase subunit alpha (504 aa).

169–176 (GDRQTGKT) contributes to the ATP binding site.

This sequence belongs to the ATPase alpha/beta chains family. F-type ATPases have 2 components, CF(1) - the catalytic core - and CF(0) - the membrane proton channel. CF(1) has five subunits: alpha(3), beta(3), gamma(1), delta(1), epsilon(1). CF(0) has three main subunits: a(1), b(2) and c(9-12). The alpha and beta chains form an alternating ring which encloses part of the gamma chain. CF(1) is attached to CF(0) by a central stalk formed by the gamma and epsilon chains, while a peripheral stalk is formed by the delta and b chains.

The protein localises to the cell membrane. It catalyses the reaction ATP + H2O + 4 H(+)(in) = ADP + phosphate + 5 H(+)(out). Produces ATP from ADP in the presence of a proton gradient across the membrane. The alpha chain is a regulatory subunit. In Clostridium botulinum (strain Loch Maree / Type A3), this protein is ATP synthase subunit alpha.